Reading from the N-terminus, the 437-residue chain is Transcription factor 12 (437 aa).

Disordered stretches follow at residues 1 to 68, 80 to 123, and 244 to 335; these read EFHD…QTGD, PDHT…YENS, and ASNT…ERRM. The span at 13–37 shows a compositional bias: polar residues; the sequence is VSPTDISTSLPPMSSFHRGSTSSSP. Thr-44 carries the post-translational modification Phosphothreonine. The residue at position 64 (Ser-64) is a Phosphoserine. The span at 83 to 94 shows a compositional bias: low complexity; that stretch reads TSSSFPSNPSTP. Composition is skewed to polar residues over residues 95-107 and 114-123; these read VGSPSPLTGTSQW and APSSPSYENS. Basic and acidic residues-rich tracts occupy residues 273-285 and 291-306; these read IKTENKEKDENLH and DDMKSDDESSQKDIKV. Residue Lys-274 forms a Glycyl lysine isopeptide (Lys-Gly) (interchain with G-Cter in SUMO2) linkage. Residue Ser-295 is modified to Phosphoserine. Lys-305 participates in a covalent cross-link: Glycyl lysine isopeptide (Lys-Gly) (interchain with G-Cter in SUMO2). Thr-312 carries the post-translational modification Phosphothreonine. Phosphoserine occurs at positions 313 and 314. Positions 323-335 are enriched in basic and acidic residues; it reads PEQKIEREKERRM. The bHLH domain maps to 332–385; that stretch reads ERRMANNARERLRVRDINEAFKELGRMCQLHLKSEKPQTKLLILHQAVAVILSL. Residues Lys-364 and Lys-408 each participate in a glycyl lysine isopeptide (Lys-Gly) (interchain with G-Cter in SUMO2) cross-link. A class A specific domain region spans residues 387 to 410; sequence QQVRERNLNPKAACLKRREEEKVS. Residues 405–437 are disordered; that stretch reads EEEKVSAASAEPPTTLPGTHPGLSETTNPMGHL. Residues 416–427 show a composition bias toward low complexity; sequence PPTTLPGTHPGL. Polar residues predominate over residues 428-437; it reads SETTNPMGHL.

Efficient DNA binding requires dimerization with another bHLH protein. Forms homo- or heterooligomers with myogenin, E12 and ITF2 proteins. Interacts with NEUROD2. Interacts with PTF1A. Interacts with RUNX1T1. Interacts with BHLHA9.

It is found in the nucleus. Its function is as follows. Transcriptional regulator. Involved in the initiation of neuronal differentiation. Activates transcription by binding to the E box (5'-CANNTG-3'). Participates in the control of inducible RP4 gene expression in salivary cells. Binds to the RIPE3 element of the insulin II promoter. May be involved in the functional network that regulates the development of the GnRH axis. This Mesocricetus auratus (Golden hamster) protein is Transcription factor 12 (TCF12).